Reading from the N-terminus, the 619-residue chain is Dihydroxy-acid dehydratase (619 aa).

Residue Asp-81 coordinates Mg(2+). Cys-122 serves as a coordination point for [2Fe-2S] cluster. Residues Asp-123 and Lys-124 each contribute to the Mg(2+) site. Lys-124 carries the post-translational modification N6-carboxylysine. Cys-195 serves as a coordination point for [2Fe-2S] cluster. Mg(2+) is bound at residue Glu-491. Ser-517 acts as the Proton acceptor in catalysis.

The protein belongs to the IlvD/Edd family. As to quaternary structure, homodimer. [2Fe-2S] cluster serves as cofactor. The cofactor is Mg(2+).

The enzyme catalyses (2R)-2,3-dihydroxy-3-methylbutanoate = 3-methyl-2-oxobutanoate + H2O. It catalyses the reaction (2R,3R)-2,3-dihydroxy-3-methylpentanoate = (S)-3-methyl-2-oxopentanoate + H2O. It functions in the pathway amino-acid biosynthesis; L-isoleucine biosynthesis; L-isoleucine from 2-oxobutanoate: step 3/4. It participates in amino-acid biosynthesis; L-valine biosynthesis; L-valine from pyruvate: step 3/4. Functionally, functions in the biosynthesis of branched-chain amino acids. Catalyzes the dehydration of (2R,3R)-2,3-dihydroxy-3-methylpentanoate (2,3-dihydroxy-3-methylvalerate) into 2-oxo-3-methylpentanoate (2-oxo-3-methylvalerate) and of (2R)-2,3-dihydroxy-3-methylbutanoate (2,3-dihydroxyisovalerate) into 2-oxo-3-methylbutanoate (2-oxoisovalerate), the penultimate precursor to L-isoleucine and L-valine, respectively. This chain is Dihydroxy-acid dehydratase, found in Rhodopseudomonas palustris (strain HaA2).